The sequence spans 123 residues: Putative EG45-like domain containing protein 1 (123 aa).

A signal peptide spans 1 to 21 (MSKSIVFFSTVLVFLFSFSYA). The Expansin-like EG45 domain maps to 24-123 (GIATFYTSYT…AGIINIDYFP (100 aa)).

The protein localises to the secreted. Functionally, might have a systemic role in water and solute homeostasis. The protein is Putative EG45-like domain containing protein 1 (EGC1) of Arabidopsis thaliana (Mouse-ear cress).